The following is a 153-amino-acid chain: Large ribosomal subunit protein uL22 (153 aa).

Residues 110–153 form a disordered region; that stretch reads ITVIVESRPPKQKGASAASARSRRAQGSKAAATKKSAETKEGSE. Basic and acidic residues predominate over residues 144–153; sequence KSAETKEGSE.

The protein belongs to the universal ribosomal protein uL22 family. In terms of assembly, part of the 50S ribosomal subunit.

This protein binds specifically to 23S rRNA; its binding is stimulated by other ribosomal proteins, e.g. L4, L17, and L20. It is important during the early stages of 50S assembly. It makes multiple contacts with different domains of the 23S rRNA in the assembled 50S subunit and ribosome. Its function is as follows. The globular domain of the protein is located near the polypeptide exit tunnel on the outside of the subunit, while an extended beta-hairpin is found that lines the wall of the exit tunnel in the center of the 70S ribosome. The polypeptide is Large ribosomal subunit protein uL22 (Mycolicibacterium smegmatis (strain ATCC 700084 / mc(2)155) (Mycobacterium smegmatis)).